Here is a 365-residue protein sequence, read N- to C-terminus: Glutamate 5-kinase 1 (365 aa).

K9 provides a ligand contact to ATP. Substrate is bound by residues S49, D136, and N148. Residues 168–169 (TD) and 210–216 (TGGMKSK) each bind ATP. In terms of domain architecture, PUA spans 276–353 (SGKITVDEGA…DEFHHEEGIE (78 aa)).

Belongs to the glutamate 5-kinase family.

The protein localises to the cytoplasm. It catalyses the reaction L-glutamate + ATP = L-glutamyl 5-phosphate + ADP. Its pathway is amino-acid biosynthesis; L-proline biosynthesis; L-glutamate 5-semialdehyde from L-glutamate: step 1/2. Catalyzes the transfer of a phosphate group to glutamate to form L-glutamate 5-phosphate. The protein is Glutamate 5-kinase 1 of Bacillus licheniformis (strain ATCC 14580 / DSM 13 / JCM 2505 / CCUG 7422 / NBRC 12200 / NCIMB 9375 / NCTC 10341 / NRRL NRS-1264 / Gibson 46).